The chain runs to 209 residues: Ras-like GTP-binding protein RYL2 (209 aa).

12-19 contacts GTP; sequence GAQGVGKT. Residues 34 to 42 carry the Effector region motif; the sequence is QASTIGASF. Residues 60–64 and 118–121 contribute to the GTP site; these read DTAGQ and TKVD. Residues Cys208 and Cys209 are each lipidated (S-geranylgeranyl cysteine).

This sequence belongs to the small GTPase superfamily. Rab family.

The protein resides in the cell membrane. Its function is as follows. Protein transport. Probably involved in vesicular traffic. The chain is Ras-like GTP-binding protein RYL2 (RYL2) from Yarrowia lipolytica (strain CLIB 122 / E 150) (Yeast).